The chain runs to 60 residues: MAKGKENRIVITLECTEAKKEGKTVSRYTTTKNKKNTTERLILKKYNPNMQRHTLHKEIK.

Belongs to the bacterial ribosomal protein bL33 family.

The polypeptide is Large ribosomal subunit protein bL33 (Pelodictyon phaeoclathratiforme (strain DSM 5477 / BU-1)).